Consider the following 58-residue polypeptide: Small ribosomal subunit protein bS21 (58 aa).

Positions 37–58 (FYEKPSVKRKKKSEAARKRKKF) are disordered. Positions 43–58 (VKRKKKSEAARKRKKF) are enriched in basic residues.

Belongs to the bacterial ribosomal protein bS21 family.

The polypeptide is Small ribosomal subunit protein bS21 (Enterococcus faecalis (strain ATCC 700802 / V583)).